A 596-amino-acid chain; its full sequence is MAQAWAFLLPVLVLGSYVTSLFFPSYISNPLCGGDGGRSLFLCAQAPKDQDPSPAVSTMYKTAFHFQPAKNWMNDPSGPMYFNGIYHEFYQYNLNGPIFGDIVWGHSVSTDLVNWIGLEPALVRDTPSDIDGCWTGSVTILPGGKPIIIYTGGDIDQHQAQNIAFPKNRSDPYLREWIKAPNNPVLRPDEPGMNSIEFRDPTTGWIGPDGLWRMAVGGELNGYSAALLYKSEDFLNWTKVDHPLYSHNGSNMWECPDFFAVLPGNNAGLDLSAAIPQGAKHALKMSVDSVDKYMIGVYDLQRDAFVPDNVVDDRRLWLRIDYGTFYASKSFFDSNKNRRIIWGWSRETDSPSDDLEKGWAGLHTIPRTIWLAGDGKQLLQWPVEEIESLRTNEISHQGIELNKGDLFEIKEVDAFQADVEIDFELASIDDADPFDPSWLLDPEKHCGEAGASVPGGIGPFGLVILASDNMDEHTEVYFRVYKSQEKYMVLMCSDLRRSSLRPDLEKPAYGGFFEFDLEKERKISLRTLIDRSAVESFGGGGRVCITSRVYPAVLADVGRAHIYAFNNGSATVRVPQLSAWTMRKAQVNVEKGWSAI.

An N-terminal signal peptide occupies residues 1–20 (MAQAWAFLLPVLVLGSYVTS). Residue aspartate 75 is part of the active site. N-linked (GlcNAc...) asparagine glycans are attached at residues asparagine 168, asparagine 236, and asparagine 248. An intrachain disulfide couples cysteine 446 to cysteine 492. A glycan (N-linked (GlcNAc...) asparagine) is linked at asparagine 567.

Belongs to the glycosyl hydrolase 32 family.

It catalyses the reaction Hydrolysis of terminal, non-reducing (2-&gt;1)-linked beta-D-fructofuranose residues in fructans.. With respect to regulation, inhibited by sucrose. In terms of biological role, hydrolyzes inulin-type beta-(2,1)-fructans, but not beta-(2,1)-linkages in branched fructans. Has low activity against beta-(2,6)-linked fructans. May play a role as a beta-(2,1)-trimmer during graminan biosynthesis. The chain is Fructan 1-exohydrolase w2 from Triticum aestivum (Wheat).